We begin with the raw amino-acid sequence, 934 residues long: DNA topoisomerase 1 (934 aa).

A disordered region spans residues 1–20 (MADPKTKGRGSGGNGSGRRL). Positions 18–142 (RRLVIVESPT…VKRMVFHEIT (125 aa)) constitute a Toprim domain. E24 and D111 together coordinate Mg(2+). In terms of domain architecture, Topo IA-type catalytic spans 157-616 (DIDLVDAQET…FYFGGDHGVP (460 aa)). Residues 191–196 (SAGRVQ) form an interaction with DNA region. Y342 acts as the O-(5'-phospho-DNA)-tyrosine intermediate in catalysis. 3 disordered regions span residues 746 to 765 (AAQG…RTGS), 842 to 892 (KRRG…KGDD), and 905 to 934 (LADR…AKRD). Residues 911 to 934 (RGPAKRPARKAARKVPAKKAAKRD) are compositionally biased toward basic residues.

This sequence belongs to the type IA topoisomerase family. In terms of assembly, monomer. It depends on Mg(2+) as a cofactor.

The enzyme catalyses ATP-independent breakage of single-stranded DNA, followed by passage and rejoining.. In terms of biological role, releases the supercoiling and torsional tension of DNA, which is introduced during the DNA replication and transcription, by transiently cleaving and rejoining one strand of the DNA duplex. Introduces a single-strand break via transesterification at a target site in duplex DNA. The scissile phosphodiester is attacked by the catalytic tyrosine of the enzyme, resulting in the formation of a DNA-(5'-phosphotyrosyl)-enzyme intermediate and the expulsion of a 3'-OH DNA strand. The free DNA strand then undergoes passage around the unbroken strand, thus removing DNA supercoils. Finally, in the religation step, the DNA 3'-OH attacks the covalent intermediate to expel the active-site tyrosine and restore the DNA phosphodiester backbone. This chain is DNA topoisomerase 1, found in Mycobacterium bovis (strain ATCC BAA-935 / AF2122/97).